The following is a 277-amino-acid chain: Hematopoietically-expressed homeobox protein HHEX (277 aa).

Disordered regions lie at residues 47–69 (AAPAPHSLPAPPPPTLPSPNSSF) and 199–277 (WRRL…SATR). Pro residues predominate over residues 52-63 (HSLPAPPPPTLP). The segment at residues 144–203 (RKGGQVRFSNEQTIELEKKFETQKYLSPPERKRLAKLLQLSERQVKTWFQNRRAKWRRLK) is a DNA-binding region (homeobox). The segment covering 210–226 (TKKEEAEGTGDHGDPRS) has biased composition (basic and acidic residues). Residues 250–266 (EDPESDVSDDSDQEVDI) are compositionally biased toward acidic residues.

As to expression, in all hematopoietic tissues except peripheral blood erythrocytes and in the liver and lung.

The protein localises to the nucleus. Functionally, recognizes the DNA sequence 5'-ATTAA-3'. Transcriptional repressor. May play a role in hematopoietic differentiation. The protein is Hematopoietically-expressed homeobox protein HHEX (HHEX) of Gallus gallus (Chicken).